The chain runs to 101 residues: Putative pterin-4-alpha-carbinolamine dehydratase (101 aa).

The protein belongs to the pterin-4-alpha-carbinolamine dehydratase family.

The enzyme catalyses (4aS,6R)-4a-hydroxy-L-erythro-5,6,7,8-tetrahydrobiopterin = (6R)-L-erythro-6,7-dihydrobiopterin + H2O. The protein is Putative pterin-4-alpha-carbinolamine dehydratase of Nitrobacter winogradskyi (strain ATCC 25391 / DSM 10237 / CIP 104748 / NCIMB 11846 / Nb-255).